A 393-amino-acid polypeptide reads, in one-letter code: Golgi membrane protein 1 (393 aa).

Met1 bears the N-acetylmethionine mark. The Cytoplasmic portion of the chain corresponds to Met1–Lys12. Residues Ser13–Ala35 traverse the membrane as a helical; Signal-anchor for type II membrane protein segment. Over Ser36–Ala393 the chain is Lumenal. Residues Val40–Glu183 are a coiled coil. Asn109 and Asn144 each carry an N-linked (GlcNAc...) asparagine glycan. Disordered stretches follow at residues Lys180–Asn247 and His284–Asn352. At Ser187 the chain carries Phosphoserine. 2 stretches are compositionally biased toward polar residues: residues Glu192 to Leu201 and Asn227 to Asn247. The N-linked (GlcNAc...) asparagine glycan is linked to Asn227. The segment covering Arg294–Glu320 has biased composition (basic and acidic residues). Residues Asp330 to Ala339 are compositionally biased toward acidic residues.

Belongs to the GOLM family. As to quaternary structure, interacts with DYM. Post-translationally, glycosylated. Phosphorylation sites are present in the extracellular medium.

It localises to the golgi apparatus. Its subcellular location is the cis-Golgi network membrane. Its function is as follows. Unknown. Cellular response protein to viral infection. The chain is Golgi membrane protein 1 (Golm1) from Mus musculus (Mouse).